The sequence spans 348 residues: Carbamoyl phosphate synthase small chain (348 aa).

Residues 1 to 167 (MKRYLITSDG…VKNIRGKGER (167 aa)) are CPSase. L-glutamine is bound by residues Ser45, Gly213, and Gly215. The Glutamine amidotransferase type-1 domain occupies 168-348 (RILFIDLGSK…RRRTEDAAKG (181 aa)). The active-site Nucleophile is Cys242. L-glutamine-binding residues include Phe243, Gln246, Asn282, Gly284, and Tyr285. Residues His321 and Glu323 contribute to the active site.

This sequence belongs to the CarA family. Composed of two chains; the small (or glutamine) chain promotes the hydrolysis of glutamine to ammonia, which is used by the large (or ammonia) chain to synthesize carbamoyl phosphate. Tetramer of heterodimers (alpha,beta)4.

The enzyme catalyses hydrogencarbonate + L-glutamine + 2 ATP + H2O = carbamoyl phosphate + L-glutamate + 2 ADP + phosphate + 2 H(+). It catalyses the reaction L-glutamine + H2O = L-glutamate + NH4(+). It functions in the pathway amino-acid biosynthesis; L-arginine biosynthesis; carbamoyl phosphate from bicarbonate: step 1/1. It participates in pyrimidine metabolism; UMP biosynthesis via de novo pathway; (S)-dihydroorotate from bicarbonate: step 1/3. Small subunit of the glutamine-dependent carbamoyl phosphate synthetase (CPSase). CPSase catalyzes the formation of carbamoyl phosphate from the ammonia moiety of glutamine, carbonate, and phosphate donated by ATP, constituting the first step of 2 biosynthetic pathways, one leading to arginine and/or urea and the other to pyrimidine nucleotides. The small subunit (glutamine amidotransferase) binds and cleaves glutamine to supply the large subunit with the substrate ammonia. The chain is Carbamoyl phosphate synthase small chain from Thermoplasma acidophilum (strain ATCC 25905 / DSM 1728 / JCM 9062 / NBRC 15155 / AMRC-C165).